The following is a 241-amino-acid chain: Octanoyltransferase (241 aa).

The BPL/LPL catalytic domain occupies 50 to 238 (KIAHEQVWLL…AFEQIFGPTI (189 aa)). Substrate is bound by residues 89 to 96 (RGGEFTYH), 169 to 171 (AIG), and 182 to 184 (GIS). Catalysis depends on Cys200, which acts as the Acyl-thioester intermediate.

Belongs to the LipB family.

The protein resides in the cytoplasm. It catalyses the reaction octanoyl-[ACP] + L-lysyl-[protein] = N(6)-octanoyl-L-lysyl-[protein] + holo-[ACP] + H(+). The protein operates within protein modification; protein lipoylation via endogenous pathway; protein N(6)-(lipoyl)lysine from octanoyl-[acyl-carrier-protein]: step 1/2. Its function is as follows. Catalyzes the transfer of endogenously produced octanoic acid from octanoyl-acyl-carrier-protein onto the lipoyl domains of lipoate-dependent enzymes. Lipoyl-ACP can also act as a substrate although octanoyl-ACP is likely to be the physiological substrate. This is Octanoyltransferase from Bartonella bacilliformis (strain ATCC 35685 / KC583 / Herrer 020/F12,63).